The primary structure comprises 150 residues: Transcriptional regulator MraZ (150 aa).

2 consecutive SpoVT-AbrB domains span residues threonine 11 to glutamate 53 and alanine 82 to threonine 125.

The protein belongs to the MraZ family. Forms oligomers.

Its subcellular location is the cytoplasm. It is found in the nucleoid. In Bifidobacterium longum (strain NCC 2705), this protein is Transcriptional regulator MraZ.